Here is a 206-residue protein sequence, read N- to C-terminus: Small ribosomal subunit protein uS4 (206 aa).

Residues Q96–V156 form the S4 RNA-binding domain.

It belongs to the universal ribosomal protein uS4 family. As to quaternary structure, part of the 30S ribosomal subunit. Contacts protein S5. The interaction surface between S4 and S5 is involved in control of translational fidelity.

Its function is as follows. One of the primary rRNA binding proteins, it binds directly to 16S rRNA where it nucleates assembly of the body of the 30S subunit. In terms of biological role, with S5 and S12 plays an important role in translational accuracy. The chain is Small ribosomal subunit protein uS4 from Alteromonas mediterranea (strain DSM 17117 / CIP 110805 / LMG 28347 / Deep ecotype).